Here is a 179-residue protein sequence, read N- to C-terminus: Large ribosomal subunit protein uL5 (179 aa).

Belongs to the universal ribosomal protein uL5 family. As to quaternary structure, part of the 50S ribosomal subunit; part of the 5S rRNA/L5/L18/L25 subcomplex. Contacts the 5S rRNA and the P site tRNA. Forms a bridge to the 30S subunit in the 70S ribosome.

This is one of the proteins that bind and probably mediate the attachment of the 5S RNA into the large ribosomal subunit, where it forms part of the central protuberance. In the 70S ribosome it contacts protein S13 of the 30S subunit (bridge B1b), connecting the 2 subunits; this bridge is implicated in subunit movement. Contacts the P site tRNA; the 5S rRNA and some of its associated proteins might help stabilize positioning of ribosome-bound tRNAs. The chain is Large ribosomal subunit protein uL5 from Bacillus cereus (strain G9842).